The primary structure comprises 496 residues: Glutamyl-tRNA(Gln) amidotransferase subunit A, mitochondrial (496 aa).

Residues Lys-80 and Ser-161 each act as charge relay system in the active site. Ser-185 functions as the Acyl-ester intermediate in the catalytic mechanism.

Belongs to the amidase family. GatA subfamily. As to quaternary structure, subunit of the heterotrimeric GatCAB amidotransferase (AdT) complex, composed of A, B and C subunits.

The protein resides in the mitochondrion. It catalyses the reaction L-glutamyl-tRNA(Gln) + L-glutamine + ATP + H2O = L-glutaminyl-tRNA(Gln) + L-glutamate + ADP + phosphate + H(+). Allows the formation of correctly charged Gln-tRNA(Gln) through the transamidation of misacylated Glu-tRNA(Gln) in the mitochondria. The reaction takes place in the presence of glutamine and ATP through an activated gamma-phospho-Glu-tRNA(Gln). The sequence is that of Glutamyl-tRNA(Gln) amidotransferase subunit A, mitochondrial from Culex quinquefasciatus (Southern house mosquito).